Here is a 168-residue protein sequence, read N- to C-terminus: Large ribosomal subunit protein bL17 (168 aa).

The segment at 124–168 is disordered; the sequence is QATGEAEAATKRAAKDAEGSAEVSEAKVDTTKADDEAAAEESKDA. A compositionally biased stretch (basic and acidic residues) spans 131–168; that stretch reads AATKRAAKDAEGSAEVSEAKVDTTKADDEAAAEESKDA.

Belongs to the bacterial ribosomal protein bL17 family. Part of the 50S ribosomal subunit. Contacts protein L32.

This chain is Large ribosomal subunit protein bL17, found in Streptomyces coelicolor (strain ATCC BAA-471 / A3(2) / M145).